We begin with the raw amino-acid sequence, 263 residues long: Ribosome maturation factor RimP (263 aa).

The tract at residues 192-263 (EREMKRDLGI…RGEIDPIEGE (72 aa)) is disordered. A compositionally biased stretch (basic residues) spans 217–231 (PARRNAPKPKLKSTA). Over residues 232 to 257 (KAHEKKPPKNTKEHRLAAERLRRGEI) the composition is skewed to basic and acidic residues.

It belongs to the RimP family.

Its subcellular location is the cytoplasm. Functionally, required for maturation of 30S ribosomal subunits. In Nitrobacter hamburgensis (strain DSM 10229 / NCIMB 13809 / X14), this protein is Ribosome maturation factor RimP.